The sequence spans 1016 residues: Mastermind-like protein 1 (1016 aa).

Residues 1–123 (MVLPTCPMAE…NLDSATSPQN (123 aa)) are required for interaction with NOTCH proteins. S45 carries the post-translational modification Phosphoserine. Disordered stretches follow at residues 65 to 184 (QAKA…LGLD), 263 to 487 (PDED…PSHV), 561 to 617 (KPKP…SQQQ), 658 to 681 (EKQQ…QGSF), and 796 to 953 (AYGQ…GGRA). Residues 67–76 (KAKRAGKHRQ) show a composition bias toward basic residues. Residues 93 to 115 (DAADGPEHGRPATHLHDTVKRNL) are compositionally biased toward basic and acidic residues. Positions 116–129 (DSATSPQNGDQQNG) are enriched in polar residues. The residue at position 120 (S120) is a Phosphoserine. A compositionally biased stretch (basic and acidic residues) spans 263-282 (PDEDMKDLFNEDFEEKKDPE). The span at 283 to 292 (SSGSATQTPL) shows a compositional bias: polar residues. S303 and S314 each carry phosphoserine. The span at 322–353 (AGQTFLGPSSAPVSTDSPSLGGSQTLFHTSGQ) shows a compositional bias: polar residues. S360 carries the phosphoserine modification. Polar residues predominate over residues 392–403 (ELSSAHQLQQIA). Low complexity predominate over residues 413–426 (QNPQQATPAPAPGQ). Polar residues-rich tracts occupy residues 427 to 439 (MSTW…SHSS), 451 to 463 (SPSS…TNSK), 577 to 595 (QEQN…SVGT), and 602 to 617 (VASS…SQQQ). Positions 801 to 810 (SLGSSGLSQQ) are enriched in low complexity. Residue K822 is modified to N6-acetyllysine. Residues 834-885 (GQNSSWQHQGMPNLSGQTPGNSNVSPFTAASSFHMQQQAHLKMSSPQFSQAV) are compositionally biased toward polar residues. Residue S1015 is modified to Phosphoserine.

The protein belongs to the mastermind family. Interacts (via N-terminus) with NOTCH1, NOTCH2, NOTCH3 and NOTCH4 (via ankyrin repeat region). Interacts (via N-terminus) with p53 (via DNA-binding region). Forms a DNA-binding complex with Notch proteins and RBPSUH/RBP-J kappa/CBF1. Also binds CREBBP/CBP and CDK8. Forms a complex with PRAG1, NOTCH1 and MAML1, in a MAML1-dependent manner. Widely expressed with highest levels in heart, pancreas, peripheral blood leukocytes and spleen.

The protein localises to the nucleus speckle. In terms of biological role, acts as a transcriptional coactivator for NOTCH proteins. Has been shown to amplify NOTCH-induced transcription of HES1. Enhances phosphorylation and proteolytic turnover of the NOTCH intracellular domain in the nucleus through interaction with CDK8. Binds to CREBBP/CBP which promotes nucleosome acetylation at NOTCH enhancers and activates transcription. Induces phosphorylation and localization of CREBBP to nuclear foci. Plays a role in hematopoietic development by regulating NOTCH-mediated lymphoid cell fate decisions. The sequence is that of Mastermind-like protein 1 from Homo sapiens (Human).